Here is a 294-residue protein sequence, read N- to C-terminus: Homeobox protein HD1 (294 aa).

The ELK domain occupies 197-217 (ELKLELKQGFKSRIEDVREEI). Residues 218–281 (MRKRRAGKLP…NQRKRNWHNN (64 aa)) constitute a DNA-binding region (homeobox; TALE-type).

Belongs to the TALE/KNOX homeobox family. As to expression, in roots, stems and cotyledons of one-week old seedlings. In mature plants, in young leaves from first level below flowers as well as in flower buds and open flowers.

It is found in the nucleus. Functionally, possible developmental regulator. The polypeptide is Homeobox protein HD1 (HD1) (Brassica napus (Rape)).